A 339-amino-acid polypeptide reads, in one-letter code: Extracellular matrix protein-binding protein emp (339 aa).

The first 26 residues, Met-1 to Ala-26, serve as a signal peptide directing secretion.

It is found in the cell surface. Its function is as follows. Adhesin that binds to the host cell extracellular matrix proteins fibronectin, fibrinogen, collagen, and vitronectin. This is Extracellular matrix protein-binding protein emp (emp) from Staphylococcus aureus (strain bovine RF122 / ET3-1).